The sequence spans 358 residues: CX3C chemokine receptor 1 (358 aa).

At 1 to 26 the chain is on the extracellular side; it reads MHTTLPESTSENFEYYDLAEACDMGD. Residues 27–47 form a helical membrane-spanning segment; it reads IVALGTVFVVILYSLVFAFGL. Topologically, residues 48–68 are cytoplasmic; sequence VGNLLVVFALINSQRSKSITD. The chain crosses the membrane as a helical span at residues 69–89; sequence IYLLNLALSDLLFVATLPFWT. Topologically, residues 90–105 are extracellular; the sequence is HYVINEQGLHHATCKL. C103 and C176 form a disulfide bridge. The chain crosses the membrane as a helical span at residues 106–126; sequence ITAFFFIGFFGGIFFITVISV. At 127 to 147 the chain is on the cytoplasmic side; sequence DRFLAIVLAANSMSNRTVQHG. The chain crosses the membrane as a helical span at residues 148-168; that stretch reads VTTSLGVWAAAILVATPQFMF. Over 169–186 the chain is Extracellular; it reads TREKENECFGDYPEILQE. Residues 187–207 form a helical membrane-spanning segment; it reads IWPVILNTEINFLGFLLPLLI. The Cytoplasmic segment spans residues 208–232; that stretch reads MSYCYFRIMQTLFSCKNHKKAKAIR. A helical transmembrane segment spans residues 233 to 253; that stretch reads LIFLVVVVFFLFWTPYNVMIF. Residues 254–275 are Extracellular-facing; the sequence is LQTLNLYDFFPKCDVKRDLKLA. Residues 276–296 form a helical membrane-spanning segment; sequence ISVTETIAFSHCCLNPLIYAF. At 297-358 the chain is on the cytoplasmic side; the sequence is AGEKFRRYLY…TSDGDASILL (62 aa). T349 is subject to Phosphothreonine.

The protein belongs to the G-protein coupled receptor 1 family. In terms of assembly, found in a ternary complex with CX3CL1 and ITGAV:ITGB3 or ITGA4:ITGB1. In terms of processing, this protein is not N-glycosylated which is unusual for G-protein-coupled receptors.

It is found in the cell membrane. Its function is as follows. Receptor for the C-X3-C chemokine fractalkine (CX3CL1) present on many early leukocyte cells; CX3CR1-CX3CL1 signaling exerts distinct functions in different tissue compartments, such as immune response, inflammation, cell adhesion and chemotaxis. CX3CR1-CX3CL1 signaling mediates cell migratory functions. Responsible for the recruitment of natural killer (NK) cells to inflamed tissues. Acts as a regulator of inflammation process leading to atherogenesis by mediating macrophage and monocyte recruitment to inflamed atherosclerotic plaques, promoting cell survival. Involved in airway inflammation by promoting interleukin 2-producing T helper (Th2) cell survival in inflamed lung. Involved in the migration of circulating monocytes to non-inflamed tissues, where they differentiate into macrophages and dendritic cells. Acts as a negative regulator of angiogenesis, probably by promoting macrophage chemotaxis. Plays a key role in brain microglia by regulating inflammatory response in the central nervous system (CNS) and regulating synapse maturation. Required to restrain the microglial inflammatory response in the CNS and the resulting parenchymal damage in response to pathological stimuli. Involved in brain development by participating in synaptic pruning, a natural process during which brain microglia eliminates extra synapses during postnatal development. Synaptic pruning by microglia is required to promote the maturation of circuit connectivity during brain development. Acts as an important regulator of the gut microbiota by controlling immunity to intestinal bacteria and fungi. Expressed in lamina propria dendritic cells in the small intestine, which form transepithelial dendrites capable of taking up bacteria in order to provide defense against pathogenic bacteria. Required to initiate innate and adaptive immune responses against dissemination of commensal fungi (mycobiota) component of the gut: expressed in mononuclear phagocytes (MNPs) and acts by promoting induction of antifungal IgG antibodies response to confer protection against disseminated C.albicans or C.auris infection. Also acts as a receptor for C-C motif chemokine CCL26, inducing cell chemotaxis. The polypeptide is CX3C chemokine receptor 1 (Bos taurus (Bovine)).